The chain runs to 191 residues: Elongation factor P 1 (191 aa).

Belongs to the elongation factor P family.

The protein resides in the cytoplasm. It participates in protein biosynthesis; polypeptide chain elongation. Functionally, involved in peptide bond synthesis. Stimulates efficient translation and peptide-bond synthesis on native or reconstituted 70S ribosomes in vitro. Probably functions indirectly by altering the affinity of the ribosome for aminoacyl-tRNA, thus increasing their reactivity as acceptors for peptidyl transferase. This is Elongation factor P 1 from Lactobacillus acidophilus (strain ATCC 700396 / NCK56 / N2 / NCFM).